A 236-amino-acid chain; its full sequence is MTINALLLSSSRVGDTPYLAHAIPFIKPLTTQAQKWIFIPYAGVSMSYDNYLASVVMGLAELNLDISGIHQHPDPCQAIKDADGILIGGGNTFHLLHELYRYNLINLIREKVAQGTPYVGWSAGANVSGASIKTTNDMPIIEPPSFDALKIVPFQLNPHYSNYRTPGHNGETRAQRLLEFTKVEPLTPVIAIAEGSALWRRDNTLVLLGKNPAYLFCGEQQEMLIPIGSDLSHLLK.

Active-site charge relay system residues include Ser-122, Asp-137, and His-159.

Belongs to the peptidase S51 family.

The protein localises to the cytoplasm. The enzyme catalyses Dipeptidase E catalyzes the hydrolysis of dipeptides Asp-|-Xaa. It does not act on peptides with N-terminal Glu, Asn or Gln, nor does it cleave isoaspartyl peptides.. Hydrolyzes dipeptides containing N-terminal aspartate residues. May play a role in allowing the cell to use peptide aspartate to spare carbon otherwise required for the synthesis of the aspartate family of amino acids. The sequence is that of Peptidase E from Shewanella sp. (strain W3-18-1).